We begin with the raw amino-acid sequence, 570 residues long: Biotin biosynthesis bifunctional protein BioHC (570 aa).

The interval M1 to Q29 is disordered. The interval M1–T279 is carboxylesterase. Positions P12–P25 are enriched in basic and acidic residues. Substrate is bound by residues W41, S105 to L106, and F175 to Q179. The Nucleophile role is filled by S105. Residues D239 and H267 contribute to the active site. H267 contacts substrate. The tract at residues M280–A570 is malonyl-ACP O-methyltransferase.

This sequence in the N-terminal section; belongs to the AB hydrolase superfamily. Carboxylesterase BioH family. The protein in the C-terminal section; belongs to the methyltransferase superfamily.

The catalysed reaction is a carboxylic ester + H2O = an alcohol + a carboxylate + H(+). It catalyses the reaction malonyl-[ACP] + S-adenosyl-L-methionine = malonyl-[ACP] methyl ester + S-adenosyl-L-homocysteine. The protein operates within cofactor biosynthesis; biotin biosynthesis. Functionally, converts the free carboxyl group of a malonyl-thioester to its methyl ester by transfer of a methyl group from S-adenosyl-L-methionine (SAM). It allows to synthesize pimeloyl-ACP via the fatty acid synthetic pathway. The physiological role of BioH is to remove the methyl group introduced by BioC when the pimeloyl moiety is complete. It allows to synthesize pimeloyl-ACP via the fatty acid synthetic pathway through the hydrolysis of the ester bonds of pimeloyl-ACP esters. This Teredinibacter turnerae (strain ATCC 39867 / T7901) protein is Biotin biosynthesis bifunctional protein BioHC (bioC).